We begin with the raw amino-acid sequence, 122 residues long: Hydrogenase maturation factor HypA (122 aa).

Position 2 (His2) interacts with Ni(2+). Residues Cys73, Cys75, Cys95, and Cys98 each contribute to the Zn(2+) site.

It belongs to the HypA/HybF family.

Involved in the maturation of [NiFe] hydrogenases. Required for nickel insertion into the metal center of the hydrogenase. This is Hydrogenase maturation factor HypA from Methanothermobacter thermautotrophicus (strain ATCC 29096 / DSM 1053 / JCM 10044 / NBRC 100330 / Delta H) (Methanobacterium thermoautotrophicum).